A 162-amino-acid chain; its full sequence is Putative pre-16S rRNA nuclease (162 aa).

This sequence belongs to the YqgF nuclease family.

The protein localises to the cytoplasm. Its function is as follows. Could be a nuclease involved in processing of the 5'-end of pre-16S rRNA. This Brucella melitensis biotype 2 (strain ATCC 23457) protein is Putative pre-16S rRNA nuclease.